A 159-amino-acid polypeptide reads, in one-letter code: Transcriptional repressor NrdR (159 aa).

The interval Met-1–Asp-21 is disordered. A zinc finger lies at Cys-3–Cys-34. One can recognise an ATP-cone domain in the interval Leu-49 to Glu-139.

Belongs to the NrdR family. Requires Zn(2+) as cofactor.

Negatively regulates transcription of bacterial ribonucleotide reductase nrd genes and operons by binding to NrdR-boxes. This Streptococcus thermophilus (strain CNRZ 1066) protein is Transcriptional repressor NrdR.